The chain runs to 37 residues: Large ribosomal subunit protein bL36c (37 aa).

Belongs to the bacterial ribosomal protein bL36 family.

It localises to the plastid. Its subcellular location is the chloroplast. The chain is Large ribosomal subunit protein bL36c from Bigelowiella natans (Pedinomonas minutissima).